Here is a 341-residue protein sequence, read N- to C-terminus: ATP-dependent 6-phosphofructokinase 3 (341 aa).

ATP is bound by residues Gly-10, Arg-72–Val-73, and Gly-102–Thr-105. Residue Glu-103 coordinates Mg(2+). Residues Thr-125–Asp-127, Arg-162, Met-169–Arg-171, Glu-222, Arg-266, and His-272–Arg-275 contribute to the substrate site. Asp-127 serves as the catalytic Proton acceptor.

It belongs to the phosphofructokinase type A (PFKA) family. Mixed-substrate PFK group III subfamily. Homodimer or homotetramer. The cofactor is Mg(2+).

The protein resides in the cytoplasm. The catalysed reaction is beta-D-fructose 6-phosphate + ATP = beta-D-fructose 1,6-bisphosphate + ADP + H(+). It functions in the pathway carbohydrate degradation; glycolysis; D-glyceraldehyde 3-phosphate and glycerone phosphate from D-glucose: step 3/4. Catalyzes the phosphorylation of D-fructose 6-phosphate to fructose 1,6-bisphosphate by ATP, the first committing step of glycolysis. The chain is ATP-dependent 6-phosphofructokinase 3 from Streptomyces coelicolor (strain ATCC BAA-471 / A3(2) / M145).